Reading from the N-terminus, the 436-residue chain is Drebrin-like protein (436 aa).

The ADF-H domain occupies 2–133; that stretch reads AVNLSRNGPA…EPECIMEKVA (132 aa). A Phosphothreonine modification is found at Thr26. At Ser160 the chain carries Phosphoserine. Lys176 carries the N6-acetyllysine modification. The stretch at 178 to 232 forms a coiled coil; that stretch reads NFWAKAEKEEENRRLEEKRRAEEEKQRLEEERRERELQEAARREQRYQEQHRSAG. Composition is skewed to basic and acidic residues over residues 185-229 and 264-275; these read KEEE…EQHR and HPREIFKQKERA. Residues 185–371 form a disordered region; it reads KEEENRRLEE…GSGHIDNYMQ (187 aa). The segment covering 276 to 286 has biased composition (polar residues); that stretch reads MSTTSVSSSQP. A phosphoserine mark is found at Ser277, Ser280, Ser283, and Ser291. The residue at position 296 (Lys296) is an N6-acetyllysine. Residue Thr299 is modified to Phosphothreonine. Phosphoserine is present on Ser311. Phosphotyrosine is present on residues Tyr340 and Tyr350. The SH3 domain maps to 377–436; sequence GQGLCARALYDYQAADDTEISFDPENLITGIEVIDEGWWRGYGPDGHFGMFPANYVELIE.

The protein belongs to the ABP1 family. In terms of assembly, interacts with FGD1, MAP4K1 and PRAM1. Interacts with ANKRD54. Interacts with WASL and WIPF1. Interacts with SHANK2 and SHANK3. Interacts with both COBL and PACSIN1. Interacts with DNM1 and SYN1. In terms of tissue distribution, detected in brain (at protein level). Widely expressed in brain with highest levels in hippocampus and cerebral cortex. Located primarily in dendrites and, in moderate amounts, in cell bodies. Isoform 1 and isoform 3 are the predominant isoforms in brain.

Its subcellular location is the cytoplasm. The protein resides in the cytoskeleton. It localises to the cell projection. The protein localises to the lamellipodium. It is found in the ruffle. Its subcellular location is the cell cortex. The protein resides in the cytosol. It localises to the cell membrane. The protein localises to the synapse. It is found in the perikaryon. Its subcellular location is the neuron projection. The protein resides in the dendrite. It localises to the postsynaptic density. The protein localises to the golgi apparatus membrane. It is found in the cytoplasmic vesicle. Its subcellular location is the clathrin-coated vesicle membrane. The protein resides in the podosome. It localises to the early endosome. Adapter protein that binds F-actin and DNM1, and thereby plays a role in receptor-mediated endocytosis. Required for the formation of organized podosome rosettes. May act as a common effector of antigen receptor-signaling pathways in leukocytes. Acts as a key component of the immunological synapse that regulates T-cell activation by bridging TCRs and the actin cytoskeleton to gene activation and endocytic processes. Plays a role in the reorganization of the actin cytoskeleton, formation of cell projections, such as neurites, in neuron morphogenesis and synapse formation via its interaction with WASL and COBL. Does not bind G-actin and promote actin polymerization by itself. The protein is Drebrin-like protein of Rattus norvegicus (Rat).